The primary structure comprises 62 residues: Phyllokinin-1 (62 aa).

Residues 1–19 (MSFLKKSLFLVLFLGLVSS) form the signal peptide. Residues 20–48 (SICEEEKRETEEEENEDEIEEESEEKKRE) constitute a propeptide that is removed on maturation. Positions 22-62 (CEEEKRETEEEENEDEIEEESEEKKREDPERPPGFTPFRVY) are disordered. Residues 30 to 42 (EEEENEDEIEEES) show a composition bias toward acidic residues. The span at 43 to 52 (EEKKREDPER) shows a compositional bias: basic and acidic residues. A Sulfotyrosine; partial modification is found at Tyr62.

It belongs to the frog skin active peptide (FSAP) family. Bradykinin-related peptide subfamily. Post-translationally, asp,Pro,Glu-[Thr6,Val10]-phyllokinin and [Thr6,Val10]-phyllokinin occur in sulfated and nonsulfated forms. [Thr6]-bradykinin and Des-Arg-[Thr6]-bradykinin are nonsulfated. Expressed by the skin glands.

It localises to the secreted. Its function is as follows. Inhibits ACE with a Ki of 1.6 uM, and targets B2 bradykinin receptor (BDKRB2). Provokes contraction of smooth muscle preparation (ileum). In vivo, induces an early hyperalgesic effects in living rats after intraplantar injection. This Pithecopus azureus (Orange-legged monkey tree frog) protein is Phyllokinin-1.